The chain runs to 965 residues: MATLPSIHAFWKLWWPTFSEERKMTVVQALRNGLTRKLFQITQIAQQILRWPPYIRERMTSSLGQSLVKTFQTLLGIRKALSRLCLTRNMNVDIFTMLLIPFKFLSQLCSQIVASANFVIQTFRHGLSRGLCLARCRNPETMRSGWSKHTLQMQNCSSTSPLMTPFQPQIARDLSNPHGLWMSTRNKLTRTGGSAIQQTSRYVRLAVRFSLLAAGAYISCVLARKALKEYVYRWELKSDQELPTREQSQISQVEQAMEQNGAMMVMKLNGPTAPILSLQDCLTKHVLVPEIVDEEGTVTQKEQSTFLIREFGPAVRNLVTLAKLEFGGIPKKTTANELTVWRFLVRKCEHANMNPTDSRTAISMALPYVFMPCRTDVGRASIPLRDESIEICRQYRAQFVEETPLRRVFNNPLSGKAWRNWVRHLGGLDDPALFQELKXGCLEEWLGVQSRRTRARHPKLRSHFKDTRHKTRRVFRIAGLGNLYEFGVHNNSAVNLERGLMERVFYVKDDKGELVSCPEPISGIFWKNLKGFRNSIVHHVGHRHPVSRETFLAYYTGPKRTMYEKAVNSLYEMPVSYDDAKLKTFVKAEKINLTKKADPVPRVIQPRAPRYNVELGRYLRPVEHPIYHAIDKIWGGPTIMKGYSVEQIGRHIENAFRSFTDPVAIGFDASRFDQHVSVEALRWEHSVYSRIYGYPELLTQLLRWQIHNRGTAYASDGAFNYQVDGKRMSGDMNISLGNCILATAITHDFVTKLGIPARLINNGDDNVLICPAVEVGRVRQELYRHWLNYGFEVISEEPVYILEQVEFCQMRPVFDGTQYTMMRDPRTTMSKDAYAVTPFNTPTAARRWMRAVGECGLSLTGGLPVKQEYYTALVKHGLDPKNIKQGKDFDSGLYYLSKLSNRKWQEVQESARYSFWLAFGYTPDEQRALEEYFKSWTPTFEWSTTGILAEIPECLLLKHNPLPPT.

Residues 662 to 778 (PVAIGFDASR…ICPAVEVGRV (117 aa)) form the RdRp catalytic domain.

Belongs to the tombusviridae RNA polymerase family.

It catalyses the reaction RNA(n) + a ribonucleoside 5'-triphosphate = RNA(n+1) + diphosphate. In terms of biological role, RNA-dependent RNA polymerase that plays an essential role in the virus replication. The protein is RNA-directed RNA polymerase of Zea mays (Maize).